Reading from the N-terminus, the 275-residue chain is Tumor necrosis factor-inducible gene 6 protein (275 aa).

The signal sequence occupies residues 1–17 (MVVLLCLCVLLWEEAHG). Positions 36–129 (GVYHREARAG…SERWDAYCYN (94 aa)) constitute a Link domain. 3 cysteine pairs are disulfide-bonded: C58/C127, C82/C103, and C135/C161. N118 is a glycosylation site (N-linked (GlcNAc...) asparagine). The 113-residue stretch at 135 to 247 (CGGVFTDPKR…GGFQIKYVTV (113 aa)) folds into the CUB domain. The Ca(2+) site is built by E183, D191, D232, S234, and V235. C188 and C210 are oxidised to a cystine. Positions 253-264 (SSQAKNTSTTGN) are enriched in polar residues. A disordered region spans residues 253–275 (SSQAKNTSTTGNKKFLPGRFSHL). An N-linked (GlcNAc...) asparagine glycan is attached at N258.

As to quaternary structure, interacts (via Link domain) with inter-alpha-inhibitor (I-alpha-I) component bikunin. Interacts with ITIH2/HC2; this interaction is required for transesterification of the HC to hyaluronan. Interacts (via Link and CUB domains) with ITIH1. Chondroitin sulfate may be required for the stability of the complex. Interacts (via Link domain) with various C-X-C and C-C chemokines including PF4, CXCL8, CXCL11, CXCL12, CCL2, CCL7, CCL19, CCL21, and CCL27; this interaction interferes with chemokine binding to glycosaminoglycans. Interacts (primarily via Link domain) with BMP2; this interaction is inhibited by hyaluronan. Interacts (via both Link and CUB domains) with TNFSF11. Interacts (via CUB domain) with FN1 (via type III repeats 9-14); this interaction enhances fibronectin fibril assembly. TNFAIP6 may act as a bridging molecule between FN1 and THBS1. As to expression, expressed in epiphyseal and metaphyseal bone marrow of both the femur and tibia (at protein level).

The protein localises to the secreted. In terms of biological role, major regulator of extracellular matrix organization during tissue remodeling. Catalyzes the transfer of a heavy chain (HC) from inter-alpha-inhibitor (I-alpha-I) complex to hyaluronan. Cleaves the ester bond between the C-terminus of the HC and GalNAc residue of the chondroitin sulfate chain in I-alpha-I complex followed by transesterification of the HC to hyaluronan. In the process, potentiates the antiprotease function of I-alpha-I complex through release of free bikunin. Acts as a catalyst in the formation of hyaluronan-HC oligomers and hyaluronan-rich matrix surrounding the cumulus cell-oocyte complex, a necessary step for oocyte fertilization. Assembles hyaluronan in pericellular matrices that serve as platforms for receptor clustering and signaling. Enables binding of hyaluronan deposited on the surface of macrophages to LYVE1 on lymphatic endothelium and facilitates macrophage extravasation. Alters hyaluronan binding to functionally latent CD44 on vascular endothelium, switching CD44 into an active state that supports leukocyte rolling. Modulates the interaction of chemokines with extracellular matrix components and proteoglycans on endothelial cell surface, likely preventing chemokine gradient formation. In a negative feedback mechanism, may limit excessive neutrophil recruitment at inflammatory sites by antagonizing the association of CXCL8 with glycosaminoglycans on vascular endothelium. Has a role in osteogenesis and bone remodeling. Inhibits BMP2-dependent differentiation of mesenchymal stem cell to osteoblasts. Protects against bone erosion during inflammation by inhibiting TNFSF11/RANKL-dependent osteoclast activation. This is Tumor necrosis factor-inducible gene 6 protein (Tnfaip6) from Mus musculus (Mouse).